The sequence spans 405 residues: Argininosuccinate synthase (405 aa).

ATP is bound by residues Ala-10–Ser-18 and Ala-37. 2 residues coordinate L-citrulline: Tyr-88 and Ser-93. Residue Gly-118 coordinates ATP. Residues Thr-120, Asn-124, and Asp-125 each contribute to the L-aspartate site. Asn-124 provides a ligand contact to L-citrulline. Arg-128, Ser-179, Ser-188, Glu-264, and Tyr-276 together coordinate L-citrulline.

Belongs to the argininosuccinate synthase family. Type 1 subfamily. Homotetramer.

The protein resides in the cytoplasm. It catalyses the reaction L-citrulline + L-aspartate + ATP = 2-(N(omega)-L-arginino)succinate + AMP + diphosphate + H(+). It functions in the pathway amino-acid biosynthesis; L-arginine biosynthesis; L-arginine from L-ornithine and carbamoyl phosphate: step 2/3. This Pseudomonas fluorescens (strain Pf0-1) protein is Argininosuccinate synthase.